The sequence spans 436 residues: 3-ketoacyl-CoA thiolase (436 aa).

Cysteine 99 serves as the catalytic Acyl-thioester intermediate. Residues histidine 392 and cysteine 422 each act as proton acceptor in the active site.

This sequence belongs to the thiolase-like superfamily. Thiolase family. As to quaternary structure, heterotetramer of two alpha chains (FadJ) and two beta chains (FadI).

It is found in the cytoplasm. The catalysed reaction is an acyl-CoA + acetyl-CoA = a 3-oxoacyl-CoA + CoA. It functions in the pathway lipid metabolism; fatty acid beta-oxidation. Catalyzes the final step of fatty acid oxidation in which acetyl-CoA is released and the CoA ester of a fatty acid two carbons shorter is formed. The sequence is that of 3-ketoacyl-CoA thiolase from Shigella boydii serotype 4 (strain Sb227).